The sequence spans 268 residues: MRRFRLVGFLSSLVLAAGAALTGAATAQAAQPAAADGYVALGDSYSSGVGAGSYISSSGDCKRSTKAHPYLWAAAHSPSTFDFTACSGARTGDVLSGQLGPLSSGTGLVSISIGGNDAGFADTMTTCVLQSESSCLSRIATAEAYVDSTLPGKLDGVYSAISDKAPNAHVVVIGYPRFYKLGTTCIGLSETKRTAINKASDHLNTVLAQRAAAHGFTFGDVRTTFTGHELCSGSPWLHSVNWLNIGESYHPTAAGQSGGYLPVLNGAA.

Residues M1–A29 form the signal peptide. S44 (nucleophile) is an active-site residue. 3 disulfide bridges follow: C61–C86, C127–C135, and C185–C231. The active site involves H250.

This sequence belongs to the 'GDSL' lipolytic enzyme family. As to quaternary structure, monomer.

It localises to the secreted. The catalysed reaction is a triacylglycerol + H2O = a diacylglycerol + a fatty acid + H(+). Its activity is regulated as follows. Strongly inhibited by Ag(+). The cations Ca(2+), Mg(2+), Co(2+) and Cu(2+) do not significantly reduce the lipolytic activity of SCO1725. Is also inhibited by DTT in vitro, but not by EDTA or by the reagent masking SH-groups, p-hydroxymercuribenzoate (pHMB). Is resistant to PMSF inhibition, except in the presence of Ca(2+). Is also strongly inhibited by 3,4-dichloroisocoumarin (DCI), another inhibitor of serine hydrolases. Addition of tetrahydrofuran and 1,4-dioxane significantly increases (2- and 4- fold, respectively) hydrolytic activity of lipase towards p-nitrophenyl caprylate. Catalyzes the hydrolysis of fatty acid esters with a preference for mid-length acyl chain (C10-C16). Is able to hydrolyze the triacylglycerol triolein and mixed triacylglycerols from a wide range of natural oils; better activity is obtained with corn-, wheat germ- and olive oil that have higher content of linoleic and/or oleic acid (C18:2; C18:1, cis). Tween detergents are also substrates for this enzyme. Displays arylesterase activity towards p-nitrophenyl alkanoate esters and alpha- and beta-naphthyl esters. The polypeptide is Lipase 1 (Streptomyces coelicolor (strain ATCC BAA-471 / A3(2) / M145)).